Reading from the N-terminus, the 616-residue chain is ATP-dependent zinc metalloprotease FtsH (616 aa).

Topologically, residues 1–8 are cytoplasmic; it reads MRNLFKTA. A helical transmembrane segment spans residues 9–29; that stretch reads TIYILIALVILLLVDIFSGGL. The Extracellular portion of the chain corresponds to 30 to 114; it reads SYNQFFSNLS…VTKEPPQVPW (85 aa). A helical transmembrane segment spans residues 115–135; it reads WLSTFLPMLIFAGLMIFVWIF. At 136-616 the chain is on the cytoplasmic side; the sequence is MLQQTQGGGS…VFEDAQPQLV (481 aa). 208 to 215 is an ATP binding site; the sequence is GPPGTGKT. H430 is a binding site for Zn(2+). E431 is a catalytic residue. The Zn(2+) site is built by H434 and D506.

The protein in the central section; belongs to the AAA ATPase family. It in the C-terminal section; belongs to the peptidase M41 family. As to quaternary structure, homohexamer. Zn(2+) serves as cofactor.

The protein resides in the cell membrane. Its function is as follows. Acts as a processive, ATP-dependent zinc metallopeptidase for both cytoplasmic and membrane proteins. Plays a role in the quality control of integral membrane proteins. In Caldicellulosiruptor bescii (strain ATCC BAA-1888 / DSM 6725 / KCTC 15123 / Z-1320) (Anaerocellum thermophilum), this protein is ATP-dependent zinc metalloprotease FtsH.